A 109-amino-acid chain; its full sequence is uncharacterized protein (109 aa).

Positions 27-89 (KEEAHQFRDK…LKRIDELIAV (63 aa)) form a coiled coil.

This is an uncharacterized protein from Streptococcus pneumoniae.